A 240-amino-acid polypeptide reads, in one-letter code: 2,3,4,5-tetrahydropyridine-2,6-dicarboxylate N-acetyltransferase (240 aa).

Belongs to the transferase hexapeptide repeat family. DapH subfamily.

The enzyme catalyses (S)-2,3,4,5-tetrahydrodipicolinate + acetyl-CoA + H2O = L-2-acetamido-6-oxoheptanedioate + CoA. Its pathway is amino-acid biosynthesis; L-lysine biosynthesis via DAP pathway; LL-2,6-diaminopimelate from (S)-tetrahydrodipicolinate (acetylase route): step 1/3. Catalyzes the transfer of an acetyl group from acetyl-CoA to tetrahydrodipicolinate. The polypeptide is 2,3,4,5-tetrahydropyridine-2,6-dicarboxylate N-acetyltransferase (Bacillus anthracis (strain A0248)).